The chain runs to 688 residues: UvrABC system protein B (688 aa).

In terms of domain architecture, Helicase ATP-binding spans 31–414; that stretch reads GRITAGETDV…LGIADGVVEQ (384 aa). Residue 44-51 participates in ATP binding; that stretch reads GATGTGKS. A Beta-hairpin motif is present at residues 97 to 120; it reads YYDYYQPEAYVPQTDTFIEKDSSI. The Helicase C-terminal domain occupies 434–600; that stretch reads QIDDLLEEIR…PLRKRIADIT (167 aa). Residues 614–633 form a disordered region; it reads LAGRDQKRKSPTPSLRSGGI. Residues 642–677 form the UVR domain; that stretch reads ESLIADLNAQMLAAAGELKFELAARLRDELSDLKRD.

The protein belongs to the UvrB family. In terms of assembly, forms a heterotetramer with UvrA during the search for lesions. Interacts with UvrC in an incision complex.

It is found in the cytoplasm. Functionally, the UvrABC repair system catalyzes the recognition and processing of DNA lesions. A damage recognition complex composed of 2 UvrA and 2 UvrB subunits scans DNA for abnormalities. Upon binding of the UvrA(2)B(2) complex to a putative damaged site, the DNA wraps around one UvrB monomer. DNA wrap is dependent on ATP binding by UvrB and probably causes local melting of the DNA helix, facilitating insertion of UvrB beta-hairpin between the DNA strands. Then UvrB probes one DNA strand for the presence of a lesion. If a lesion is found the UvrA subunits dissociate and the UvrB-DNA preincision complex is formed. This complex is subsequently bound by UvrC and the second UvrB is released. If no lesion is found, the DNA wraps around the other UvrB subunit that will check the other stand for damage. The chain is UvrABC system protein B from Leifsonia xyli subsp. xyli (strain CTCB07).